A 573-amino-acid chain; its full sequence is MRFPSMGTSDVAGVRGDVPSLPPRLIKTQNGFTVLYRNTYLYSKYRAQDAHERAVARLAVKPHTLVLCCAPVLGHGLCALLTRMPPSSFLLCLECDLQLMHLFMQHAPRQLITAQNVYVLYTTHITQVLHTVERLTRFPFKQILKIAGSGAYAQYRNFYDESEQNIRTLIDTFWINKITLIHSGRNYARNIFSNYITQLQNPSHIHHLVPQSIDKPLLIVGAGPALDACRSFCARMKDTIFLLAVDVACNALLPDIVPDAVVLLESQFWIEQAFIGTLPRTVALFADLSAFPRAVRAANVPTHFFFTPYTHAAFIKRAQNAGVVPLSIHPSGSVGLAALQLALRLRKKGVPIFHTGLNFSWNKGFTHARGSAPVQRLYHSTTRLHSLYPDCALFPEGIRSLKGKRYAVQSIPNLVHYAHAYRTLCAEHPHLYDLDQEGLALTTSHTVSHAQACEIITHCCTRRHRTHVPILHTQDAQISFAFSQKPAEDFCLRVKELLTTERAALLQLKHMLTTATPSNQDVIRALIRRSDYLYLHFPDGERAEYLEYNFLCRVRAELDFFLKLLSRIPSSLD.

This is an uncharacterized protein from Treponema pallidum (strain Nichols).